The chain runs to 326 residues: Fos-related antigen 2 (326 aa).

Met-1 bears the N-acetylmethionine mark. The interval 1–39 (MYQDYPGNFDTSSRGSSGSPAHAESYSSGGGGQQKFRVD) is disordered. Positions 9–19 (FDTSSRGSSGS) are enriched in polar residues. A Glycyl lysine isopeptide (Lys-Gly) (interchain with G-Cter in SUMO2) cross-link involves residue Lys-35. Lys-104 carries the post-translational modification N6-acetyllysine; alternate. Lys-104 is covalently cross-linked (Glycyl lysine isopeptide (Lys-Gly) (interchain with G-Cter in SUMO2); alternate). 3 disordered regions span residues 111-131 (GRRRRDEQLSPEEEEKRRIRR), 193-244 (ISPE…QRSV), and 289-326 (EQESPASPSESCSKAHRRSSSSGDQSSDSLNSPTLLAL). Ser-120 is subject to Phosphoserine. Residues 124–187 (EEKRRIRRER…EKLEFMLVAH (64 aa)) form the bZIP domain. The basic motif stretch occupies residues 126–128 (KRR). The leucine-zipper stretch occupies residues 129 to 136 (IRRERNKL). The residue at position 200 (Ser-200) is a Phosphoserine. A compositionally biased stretch (polar residues) spans 201–211 (PPTSGLQSLRG). Lys-222 is covalently cross-linked (Glycyl lysine isopeptide (Lys-Gly) (interchain with G-Cter in SUMO2); alternate). Lys-222 is covalently cross-linked (Glycyl lysine isopeptide (Lys-Gly) (interchain with G-Cter in SUMO1); alternate). Position 230 is a phosphoserine (Ser-230). A Glycyl lysine isopeptide (Lys-Gly) (interchain with G-Cter in SUMO2) cross-link involves residue Lys-239. A phosphoserine mark is found at Ser-308 and Ser-320. Low complexity predominate over residues 308–320 (SSSGDQSSDSLNS).

It belongs to the bZIP family. Fos subfamily. Heterodimer. Interacts with the BAF multiprotein chromatin-remodeling complex subunits SMARCB1 and SMARCD1. Interacts with ARID1A and JUN. Expressed in the brain cortex. Expressed at night in pineal gland (at protein level). Also expressed in osteoblasts (at protein level).

Its subcellular location is the nucleus. Its function is as follows. Controls osteoclast survival and size. As a dimer with JUN, activates LIF transcription. Activates CEBPB transcription in PGE2-activated osteoblasts. In Rattus norvegicus (Rat), this protein is Fos-related antigen 2 (Fosl2).